A 254-amino-acid polypeptide reads, in one-letter code: uncharacterized protein (254 aa).

A coiled-coil region spans residues 66-111; sequence DMVSEMNKRMDDLAARIVVLEDEKAELRRINQRLTEKVRDKDMEKA.

This is an uncharacterized protein from Ostreid herpesvirus 1 (isolate France) (OsHV-1).